The primary structure comprises 104 residues: MVLTKAEISDYLFHKLELSKQNIKDLVEIFFEEVRKSLELGESVKLSGFGNFYLRDKKQRPGRNPKTGEYIPISARRVVVFKPGQKLRSRVESFKDIKKEKDIV.

Belongs to the bacterial histone-like protein family. Heterodimer of an alpha and a beta chain.

Functionally, this protein is one of the two subunits of integration host factor, a specific DNA-binding protein that functions in genetic recombination as well as in transcriptional and translational control. The chain is Integration host factor subunit alpha from Buchnera aphidicola subsp. Cinara cedri (strain Cc).